A 517-amino-acid chain; its full sequence is GMP synthase [glutamine-hydrolyzing] (517 aa).

The Glutamine amidotransferase type-1 domain occupies 9–199 (RILILDFGSQ…VLNVCGCEGL (191 aa)). The active-site Nucleophile is C86. Active-site residues include H173 and E175. Positions 200 to 392 (WTSASIIEDA…LGLPYNMLYR (193 aa)) constitute a GMPS ATP-PPase domain. ATP is bound at residue 227 to 233 (SGGVDSS).

As to quaternary structure, homodimer.

The catalysed reaction is XMP + L-glutamine + ATP + H2O = GMP + L-glutamate + AMP + diphosphate + 2 H(+). Its pathway is purine metabolism; GMP biosynthesis; GMP from XMP (L-Gln route): step 1/1. In terms of biological role, catalyzes the synthesis of GMP from XMP. In Aliivibrio fischeri (strain MJ11) (Vibrio fischeri), this protein is GMP synthase [glutamine-hydrolyzing].